The chain runs to 225 residues: NAD(P)H-quinone oxidoreductase subunit K, chloroplastic (225 aa).

Residues cysteine 43, cysteine 44, cysteine 108, and cysteine 139 each contribute to the [4Fe-4S] cluster site.

It belongs to the complex I 20 kDa subunit family. In terms of assembly, NDH is composed of at least 16 different subunits, 5 of which are encoded in the nucleus. The cofactor is [4Fe-4S] cluster.

Its subcellular location is the plastid. The protein localises to the chloroplast thylakoid membrane. The catalysed reaction is a plastoquinone + NADH + (n+1) H(+)(in) = a plastoquinol + NAD(+) + n H(+)(out). The enzyme catalyses a plastoquinone + NADPH + (n+1) H(+)(in) = a plastoquinol + NADP(+) + n H(+)(out). Its function is as follows. NDH shuttles electrons from NAD(P)H:plastoquinone, via FMN and iron-sulfur (Fe-S) centers, to quinones in the photosynthetic chain and possibly in a chloroplast respiratory chain. The immediate electron acceptor for the enzyme in this species is believed to be plastoquinone. Couples the redox reaction to proton translocation, and thus conserves the redox energy in a proton gradient. The protein is NAD(P)H-quinone oxidoreductase subunit K, chloroplastic of Oryza nivara (Indian wild rice).